Here is a 316-residue protein sequence, read N- to C-terminus: Pantothenate kinase (316 aa).

95 to 102 lines the ATP pocket; the sequence is GSVAVGKS.

It belongs to the prokaryotic pantothenate kinase family.

The protein resides in the cytoplasm. The catalysed reaction is (R)-pantothenate + ATP = (R)-4'-phosphopantothenate + ADP + H(+). Its pathway is cofactor biosynthesis; coenzyme A biosynthesis; CoA from (R)-pantothenate: step 1/5. In Shewanella halifaxensis (strain HAW-EB4), this protein is Pantothenate kinase.